The following is a 314-amino-acid chain: Olfactory receptor 5F1 (314 aa).

The Extracellular portion of the chain corresponds to 1–25 (MTRKNYTSLTEFVLLGLADTLELQI). N5 is a glycosylation site (N-linked (GlcNAc...) asparagine). A helical membrane pass occupies residues 26 to 46 (ILFLFFLVIYTLTVLGNLGMI). At 47 to 54 (LLIRIDSQ) the chain is on the cytoplasmic side. A helical membrane pass occupies residues 55-75 (LHTPMYFFLANLSFVDVCNST). The Extracellular portion of the chain corresponds to 76 to 99 (TITPKMLADLLSEKKTISFAGCFL). A disulfide bond links C97 and C189. The helical transmembrane segment at 100-120 (QMYFFISLATTECILFGLMAY) threads the bilayer. Residues 121–139 (DRYAAICRPLLYSLIMSRT) are Cytoplasmic-facing. The chain crosses the membrane as a helical span at residues 140–160 (VYLKMAAGAFAAGLLNFMVNT). Topologically, residues 161–196 (SHVSSLSFCDSNVIHHFFCDSPPLFKLSCSDTILKE) are extracellular. A helical transmembrane segment spans residues 197-217 (SISSILAGVNIVGTLLVILSS). The Cytoplasmic segment spans residues 218 to 237 (YSYVLFSIFSMHSGEGRHRA). Residues 238 to 258 (FSTCASHLTAIILFYATCIYT) form a helical membrane-spanning segment. At 259–271 (YLRPSSSYSLNQD) the chain is on the extracellular side. The chain crosses the membrane as a helical span at residues 272 to 292 (KVASVFYTVVIPMLNPLIYSL). Topologically, residues 293–314 (RSKEVKKALANVISRKRTSSFL) are cytoplasmic.

This sequence belongs to the G-protein coupled receptor 1 family.

Its subcellular location is the cell membrane. Functionally, odorant receptor. This Homo sapiens (Human) protein is Olfactory receptor 5F1 (OR5F1).